A 472-amino-acid chain; its full sequence is Siroheme synthase (472 aa).

A precorrin-2 dehydrogenase /sirohydrochlorin ferrochelatase region spans residues 1 to 204 (MDYLPIFTKL…GQTEKAIALM (204 aa)). NAD(+) is bound by residues 22 to 23 (SI) and 43 to 44 (LE). A Phosphoserine modification is found at Ser128. Residues 215-472 (GDVALVGAGP…SRDPFLVNLA (258 aa)) form a uroporphyrinogen-III C-methyltransferase region. Pro224 provides a ligand contact to S-adenosyl-L-methionine. Asp247 (proton acceptor) is an active-site residue. The Proton donor role is filled by Lys269. Residues 300–302 (GGD), Ile305, 330–331 (TA), Met382, and Gly411 each bind S-adenosyl-L-methionine.

The protein in the N-terminal section; belongs to the precorrin-2 dehydrogenase / sirohydrochlorin ferrochelatase family. In the C-terminal section; belongs to the precorrin methyltransferase family.

It carries out the reaction uroporphyrinogen III + 2 S-adenosyl-L-methionine = precorrin-2 + 2 S-adenosyl-L-homocysteine + H(+). The enzyme catalyses precorrin-2 + NAD(+) = sirohydrochlorin + NADH + 2 H(+). It catalyses the reaction siroheme + 2 H(+) = sirohydrochlorin + Fe(2+). The protein operates within cofactor biosynthesis; adenosylcobalamin biosynthesis; precorrin-2 from uroporphyrinogen III: step 1/1. It functions in the pathway cofactor biosynthesis; adenosylcobalamin biosynthesis; sirohydrochlorin from precorrin-2: step 1/1. Its pathway is porphyrin-containing compound metabolism; siroheme biosynthesis; precorrin-2 from uroporphyrinogen III: step 1/1. It participates in porphyrin-containing compound metabolism; siroheme biosynthesis; siroheme from sirohydrochlorin: step 1/1. The protein operates within porphyrin-containing compound metabolism; siroheme biosynthesis; sirohydrochlorin from precorrin-2: step 1/1. Its function is as follows. Multifunctional enzyme that catalyzes the SAM-dependent methylations of uroporphyrinogen III at position C-2 and C-7 to form precorrin-2 via precorrin-1. Then it catalyzes the NAD-dependent ring dehydrogenation of precorrin-2 to yield sirohydrochlorin. Finally, it catalyzes the ferrochelation of sirohydrochlorin to yield siroheme. The protein is Siroheme synthase of Psychromonas ingrahamii (strain DSM 17664 / CCUG 51855 / 37).